Here is a 132-residue protein sequence, read N- to C-terminus: Venom CUB domain-containing protein 2 (132 aa).

Residues 1 to 17 form the signal peptide; the sequence is MKTLFLAIALFSAVALA. Residues 22-129 enclose the CUB domain; the sequence is ESAELVPGGE…RGFVACKATA (108 aa). Intrachain disulfides connect cysteine 66/cysteine 125 and cysteine 77/cysteine 94.

It belongs to the venom CUB family. Expressed by the venom gland (posterior main gland) (at protein level).

The protein localises to the secreted. The chain is Venom CUB domain-containing protein 2 from Platymeris rhadamanthus (Red spot assassin bug).